Here is a 218-residue protein sequence, read N- to C-terminus: MDVRTERLNELFFVYHKNLKNQSKSKYSRAVNYLKRRGFNLQDFLKVGGGVGYLQNKEWLNLPLYSFDGNLIGFLNRKVSYKKEFLYTPFNKPPSKSEAFVGLRELVIKDNSIYLVEGDFDWLAFRKAGILNSLPLCGLTISNQQVQWLKQKKIKKIFICFDNDLAGKNGAKNLKEYLTKQGFITKVIEIKAAAKDWNDLFLLNNSNWSAVLTNQLLF.

In terms of domain architecture, Toprim spans 111–193 (NSIYLVEGDF…ITKVIEIKAA (83 aa)).

This is an uncharacterized protein from Mycoplasma genitalium (strain ATCC 33530 / DSM 19775 / NCTC 10195 / G37) (Mycoplasmoides genitalium).